The following is a 324-amino-acid chain: Mevalonate kinase (324 aa).

Residue 103 to 113 (PPRAGLGSSAA) coordinates ATP. Aspartate 154 acts as the Proton acceptor in catalysis.

It belongs to the GHMP kinase family. Mevalonate kinase subfamily. In terms of assembly, homodimer. Mg(2+) serves as cofactor.

Its subcellular location is the cytoplasm. The enzyme catalyses (R)-mevalonate + ATP = (R)-5-phosphomevalonate + ADP + H(+). Its pathway is isoprenoid biosynthesis; isopentenyl diphosphate biosynthesis via mevalonate pathway; isopentenyl diphosphate from (R)-mevalonate: step 1/3. In terms of biological role, catalyzes the phosphorylation of (R)-mevalonate (MVA) to (R)-mevalonate 5-phosphate (MVAP). Functions in the mevalonate (MVA) pathway leading to isopentenyl diphosphate (IPP), a key precursor for the biosynthesis of isoprenoid compounds such as archaeal membrane lipids. The chain is Mevalonate kinase from Aeropyrum pernix (strain ATCC 700893 / DSM 11879 / JCM 9820 / NBRC 100138 / K1).